The chain runs to 88 residues: Acylphosphatase (88 aa).

The Acylphosphatase-like domain maps to 3–88; it reads AARFVVSGVV…VPPTEDFVTG (86 aa). Catalysis depends on residues Arg-18 and Asn-36.

It belongs to the acylphosphatase family.

It carries out the reaction an acyl phosphate + H2O = a carboxylate + phosphate + H(+). The sequence is that of Acylphosphatase (acyP) from Xanthomonas oryzae pv. oryzae (strain MAFF 311018).